We begin with the raw amino-acid sequence, 255 residues long: Taurine import ATP-binding protein TauB (255 aa).

Residues L2–A229 form the ABC transporter domain. G34 to T41 lines the ATP pocket.

Belongs to the ABC transporter superfamily. Taurine importer (TC 3.A.1.17.1) family. In terms of assembly, the complex is composed of two ATP-binding proteins (TauB), two transmembrane proteins (TauC) and a solute-binding protein (TauA).

Its subcellular location is the cell inner membrane. It catalyses the reaction taurine(out) + ATP + H2O = taurine(in) + ADP + phosphate + H(+). Its function is as follows. Part of the ABC transporter complex TauABC involved in taurine import. Responsible for energy coupling to the transport system. The polypeptide is Taurine import ATP-binding protein TauB (Yersinia pestis bv. Antiqua (strain Antiqua)).